Here is a 323-residue protein sequence, read N- to C-terminus: CTD kinase subunit beta (323 aa).

Belongs to the cyclin family. As to quaternary structure, CTDK-I consists of three subunits, CTK1, CTK2 and CTK3 (also called alpha, beta and gamma). Interacts with CTK1. Heterodimerization with CTK3 is required to protect this subunit from degradation. Post-translationally, phosphorylated. Ubiquitinated. Phosphorylation and ubiquitination lead to degradation in growth-related way by the ubiquitin-proteasome pathway. Neither phosphorylation nor degradation requires association with CTK1.

Its subcellular location is the nucleus. The protein localises to the nucleolus. Cyclin subunit of the CTDK-I complex, which hyperphosphorylates the C-terminal heptapeptide repeat domain (CTD) of the largest RNA polymerase II subunit. CTDK-I phosphorylates 'Ser-5' if the CTD substrate is not phosphorylated at 'Ser-5', but will phosphorylate 'Ser-2' of a CTD substrate if 'Ser-5' is already phosphorylated. CTDK-I is also more reactive toward substrates that are prephosphorylated at 'Ser-2' or 'Ser-5' compared with an unphosphorylated CTD substrate, therefore efficiently creating doubly phosphorylated CTD repeats. Involved in RNA polymerase II transcriptional elongation, and as part of the CTDK-I complex, pre-mRNA 3'-end processing and SET2 mediated H3K36 methylation. Together with CTK3, required for CTK1 CTD kinase activation. Required for DNA damage induced transcription. Involved in the adaptation to alternative carbon sources, including galactose, glycerol and ethanol, but not raffinose. Required for the integrity of the rDNA locus. The sequence is that of CTD kinase subunit beta (CTK2) from Saccharomyces cerevisiae (strain ATCC 204508 / S288c) (Baker's yeast).